The primary structure comprises 23 residues: Coenzyme PQQ synthesis protein A (23 aa).

The pyrroloquinoline quinone (Glu-Tyr) cross-link spans 15–19 (EVTLY).

The protein belongs to the PqqA family.

The protein operates within cofactor biosynthesis; pyrroloquinoline quinone biosynthesis. Required for coenzyme pyrroloquinoline quinone (PQQ) biosynthesis. PQQ is probably formed by cross-linking a specific glutamate to a specific tyrosine residue and excising these residues from the peptide. This is Coenzyme PQQ synthesis protein A from Klebsiella pneumoniae (strain 342).